The following is a 116-amino-acid chain: Methionine-R-sulfoxide reductase B1 (116 aa).

In terms of domain architecture, MsrB spans 1–106; it reads MSFCSFFGGE…FSSSLKFVPK (106 aa). Cys23, Cys26, Cys71, and Cys74 together coordinate Zn(2+). Catalysis depends on Sec95, which acts as the Nucleophile. Residue Sec95 is a non-standard amino acid, selenocysteine.

It belongs to the MsrB Met sulfoxide reductase family. Zn(2+) serves as cofactor. In terms of processing, truncated MSRB1/SEPX1 proteins produced by failed UGA/Sec decoding are ubiquitinated by the CRL2(FEM1C) E3 ubiquitin-protein ligase complex.

It is found in the cytoplasm. It localises to the nucleus. The protein localises to the cytoskeleton. The catalysed reaction is L-methionyl-[protein] + [thioredoxin]-disulfide + H2O = L-methionyl-(R)-S-oxide-[protein] + [thioredoxin]-dithiol. It catalyses the reaction [thioredoxin]-disulfide + L-methionine + H2O = L-methionine (R)-S-oxide + [thioredoxin]-dithiol. In terms of biological role, methionine-sulfoxide reductase that specifically reduces methionine (R)-sulfoxide back to methionine. While in many cases, methionine oxidation is the result of random oxidation following oxidative stress, methionine oxidation is also a post-translational modification that takes place on specific residue. Acts as a regulator of actin assembly by reducing methionine (R)-sulfoxide mediated by MICALs (MICAL1, MICAL2 or MICAL3) on actin, thereby promoting filament repolymerization. Plays a role in innate immunity by reducing oxidized actin, leading to actin repolymerization in macrophages. This Pongo abelii (Sumatran orangutan) protein is Methionine-R-sulfoxide reductase B1 (MSRB1).